Consider the following 466-residue polypeptide: Ribulose bisphosphate carboxylase large chain (466 aa).

Lysine 4 carries the N6,N6,N6-trimethyllysine modification. Residues asparagine 113 and threonine 163 each contribute to the substrate site. Lysine 165 (proton acceptor) is an active-site residue. Lysine 167 contacts substrate. Lysine 191, aspartate 193, and glutamate 194 together coordinate Mg(2+). An N6-carboxylysine modification is found at lysine 191. The Proton acceptor role is filled by histidine 284. Substrate is bound by residues arginine 285, histidine 317, and serine 369.

The protein belongs to the RuBisCO large chain family. Type I subfamily. Heterohexadecamer of 8 large chains and 8 small chains; disulfide-linked. The disulfide link is formed within the large subunit homodimers. It depends on Mg(2+) as a cofactor. Post-translationally, the disulfide bond which can form in the large chain dimeric partners within the hexadecamer appears to be associated with oxidative stress and protein turnover.

Its subcellular location is the plastid. The protein resides in the chloroplast. It carries out the reaction 2 (2R)-3-phosphoglycerate + 2 H(+) = D-ribulose 1,5-bisphosphate + CO2 + H2O. The catalysed reaction is D-ribulose 1,5-bisphosphate + O2 = 2-phosphoglycolate + (2R)-3-phosphoglycerate + 2 H(+). In terms of biological role, ruBisCO catalyzes two reactions: the carboxylation of D-ribulose 1,5-bisphosphate, the primary event in carbon dioxide fixation, as well as the oxidative fragmentation of the pentose substrate in the photorespiration process. Both reactions occur simultaneously and in competition at the same active site. The chain is Ribulose bisphosphate carboxylase large chain from Pinguicula caerulea (Blueflower butterwort).